The chain runs to 445 residues: Proline--tRNA ligase (445 aa).

Belongs to the class-II aminoacyl-tRNA synthetase family. ProS type 2 subfamily. Homodimer.

The protein localises to the cytoplasm. The catalysed reaction is tRNA(Pro) + L-proline + ATP = L-prolyl-tRNA(Pro) + AMP + diphosphate. In terms of biological role, catalyzes the attachment of proline to tRNA(Pro) in a two-step reaction: proline is first activated by ATP to form Pro-AMP and then transferred to the acceptor end of tRNA(Pro). This Cereibacter sphaeroides (strain ATCC 17025 / ATH 2.4.3) (Rhodobacter sphaeroides) protein is Proline--tRNA ligase.